Reading from the N-terminus, the 42-residue chain is uncharacterized protein (42 aa).

This is an uncharacterized protein from Escherichia coli (Bacteriophage T4).